The sequence spans 360 residues: C-C chemokine receptor type 4 (360 aa).

The Extracellular segment spans residues 1–39 (MNPTDIADTTLDESIYSNYYLYESIPKPCTKEGIKAFGE). A helical membrane pass occupies residues 40-67 (LFLPPLYSLVFVFGLLGNSVVVLVLFKY). Topologically, residues 68–77 (KRLRSMTDVY) are cytoplasmic. Residues 78–98 (LLNLAISDLLFVFSLPFWGYY) form a helical membrane-spanning segment. The Extracellular segment spans residues 99 to 111 (AADQWVFGLGLCK). A disulfide bridge links Cys110 with Cys187. Residues 112–133 (MISWMYLVGFYSGIFFVMLMSI) traverse the membrane as a helical segment. Residues 134 to 150 (DRYLAIVHAVFSLRART) lie on the Cytoplasmic side of the membrane. The helical transmembrane segment at 151–175 (LTYGVITSLATWSVAVFASLPGFLF) threads the bilayer. Topologically, residues 176 to 206 (STCYTERNHTYCKTKYSLNSTTWKVLSSLEI) are extracellular. Asn183 and Asn194 each carry an N-linked (GlcNAc...) asparagine glycan. Residues 207 to 226 (NILGLVIPLGIMLFCYSMII) traverse the membrane as a helical segment. Residues 227 to 242 (RTLQHCKNEKKNKAVK) are Cytoplasmic-facing. Residues 243-267 (MIFAVVVLFLGFWTPYNIVLFLETL) form a helical membrane-spanning segment. At 268–284 (VELEVLQDCTFERYLDY) the chain is on the extracellular side. A helical transmembrane segment spans residues 285–308 (AIQATETLAFVHCCLNPIIYFFLG). Residues 309 to 360 (EKFRKYILQLFKTCRGLFVLCQYCGLLQIYSADTPSSSYTQSTMDHDLHDAL) lie on the Cytoplasmic side of the membrane.

This sequence belongs to the G-protein coupled receptor 1 family. Post-translationally, in natural killer cells, CCL22 binding induces phosphorylation on yet undefined Ser/Thr residues, most probably by beta-adrenergic receptor kinases 1 and 2. As to expression, predominantly expressed in the thymus, in peripheral blood leukocytes, including T-cells, mostly CD4+ cells, and basophils, and in platelets; at lower levels, in the spleen and in monocytes. Detected also in macrophages, IL-2-activated natural killer cells and skin-homing memory T-cells, mostly the ones expressing the cutaneous lymphocyte antigen (CLA). Expressed in brain microvascular and coronary artery endothelial cells.

The protein resides in the cell membrane. Functionally, high affinity receptor for the C-C type chemokines CCL17/TARC, CCL22/MDC and CKLF isoform 1/CKLF1. The activity of this receptor is mediated by G(i) proteins which activate a phosphatidylinositol-calcium second messenger system. Can function as a chemoattractant homing receptor on circulating memory lymphocytes and as a coreceptor for some primary HIV-2 isolates. In the CNS, could mediate hippocampal-neuron survival. In Homo sapiens (Human), this protein is C-C chemokine receptor type 4 (CCR4).